Here is a 532-residue protein sequence, read N- to C-terminus: Intercellular adhesion molecule 1 (532 aa).

A signal peptide spans 1–27; sequence MAPSSPRPALPALLVLLGALFPGPGNA. The Extracellular portion of the chain corresponds to 28–480; the sequence is QTSVSPPKVI…TVNVLSPRYE (453 aa). Ig-like C2-type domains are found at residues 41–103 and 128–193; these read GGSV…QSTA and GKDL…LDLR. 3 disulfides stabilise this stretch: Cys-48-Cys-92, Cys-52-Cys-96, and Cys-135-Cys-186. The short motif at 152-154 is the Cell attachment site; atypical element; sequence RGE. Asn-202 and Asn-267 each carry an N-linked (GlcNAc...) asparagine glycan. 2 Ig-like C2-type domains span residues 230-297 and 325-378; these read DTQG…LGTQ and GTEV…LEVA. Disulfide bonds link Cys-237-Cys-290 and Cys-332-Cys-371. N-linked (GlcNAc...) asparagine glycans are attached at residues Asn-385 and Asn-406. 3 cysteine pairs are disulfide-bonded: Cys-403-Cys-419, Cys-419-Cys-457, and Cys-431-Cys-457. One can recognise an Ig-like C2-type 5 domain in the interval 412–464; that stretch reads NSQQTPMCQAWGNPLPELKCLKDGTFPLPVGESVTVTRDLEGTYLCRARSTQG. The chain crosses the membrane as a helical span at residues 481–503; that stretch reads FVIIAVVAAAVIMGTAGLSTYLY. The Cytoplasmic portion of the chain corresponds to 504-532; that stretch reads NRQRKIRKYRLQQAQKGTPMKPNTQATPP. Residues Thr-521 and Thr-530 each carry the phosphothreonine modification.

It belongs to the immunoglobulin superfamily. ICAM family. In terms of assembly, homodimer. Interacts with MUC1 and promotes cell aggregation in epithelial cells. Interacts with ARHGEF26/SGEF. Interacts (on T cell side) with CD81, CD247 and CD9 at immunological synapses between antigen-presenting cells and T cells. Post-translationally, monoubiquitinated, which is promoted by MARCH9 and leads to endocytosis.

The protein localises to the membrane. ICAM proteins are ligands for the leukocyte adhesion protein LFA-1 (integrin alpha-L/beta-2). During leukocyte trans-endothelial migration, ICAM1 engagement promotes the assembly of endothelial apical cups through ARHGEF26/SGEF and RHOG activation. This chain is Intercellular adhesion molecule 1 (ICAM1), found in Gorilla gorilla gorilla (Western lowland gorilla).